Here is a 90-residue protein sequence, read N- to C-terminus: Conotoxin ba9a (90 aa).

The N-terminal stretch at 1–27 is a signal peptide; sequence MHLSLARSAGLMWLLLFAVGNFVGVQP. Residues 28–62 constitute a propeptide that is removed on maturation; sequence GQITRDVDNGQLADNRRNLQSLRKPMTLFKSLNKR. Residue Glu67 is modified to 4-carboxyglutamate. 2 positions are modified to 4-hydroxyproline: Pro76 and Pro80.

Expressed by the venom duct.

The protein resides in the secreted. The protein is Conotoxin ba9a of Conus bayani (Bayan's cone).